We begin with the raw amino-acid sequence, 533 residues long: Flavin-containing monooxygenase 5 (533 aa).

At Arg-5 the chain carries Dimethylated arginine. FAD-binding positions include 10 to 14 (GAGAS), Glu-33, and 41 to 42 (LW). Phosphoserine is present on Ser-54. Tyr-56 is modified (phosphotyrosine). Ser-58 is modified (phosphoserine). 62-63 (NT) contacts FAD. Position 196-199 (196-199 (SGGD)) interacts with NADP(+). Ser-280 carries the post-translational modification Phosphoserine. Thr-284 carries the phosphothreonine modification. Ser-401 carries the post-translational modification Phosphoserine. The helical transmembrane segment at 513 to 533 (MMTMGKFMLAIAFLAIAVVYF) threads the bilayer.

The protein belongs to the FMO family. Requires FAD as cofactor. In terms of tissue distribution, kidney and liver.

It localises to the microsome membrane. The protein localises to the endoplasmic reticulum membrane. It carries out the reaction N,N-dimethylaniline + NADPH + O2 + H(+) = N,N-dimethylaniline N-oxide + NADP(+) + H2O. The catalysed reaction is NADPH + O2 + H(+) = H2O2 + NADP(+). The enzyme catalyses heptan-2-one + NADPH + O2 + H(+) = pentyl acetate + NADP(+) + H2O. It catalyses the reaction octan-3-one + NADPH + O2 + H(+) = pentyl propanoate + NADP(+) + H2O. It carries out the reaction octan-3-one + NADPH + O2 + H(+) = ethyl hexanoate + NADP(+) + H2O. The catalysed reaction is hexan-3-one + NADPH + O2 + H(+) = ethyl butanoate + NADP(+) + H2O. The enzyme catalyses hexan-3-one + NADPH + O2 + H(+) = propyl propanoate + NADP(+) + H2O. It catalyses the reaction heptan-4-one + NADPH + O2 + H(+) = propyl butanoate + NADP(+) + H2O. It carries out the reaction (2E)-geranial + NADPH + O2 + H(+) = (1E)-2,6-dimethylhepta-1,5-dien-1-yl formate + NADP(+) + H2O. The catalysed reaction is sulcatone + NADPH + O2 + H(+) = 4-methylpent-3-en-1-yl acetate + NADP(+) + H2O. Its function is as follows. Acts as a Baeyer-Villiger monooxygenase on a broad range of substrates. Catalyzes the insertion of an oxygen atom into a carbon-carbon bond adjacent to a carbonyl, which converts ketones to esters. Active on diverse carbonyl compounds, whereas soft nucleophiles are mostly non- or poorly reactive. In contrast with other forms of FMO it is non- or poorly active on 'classical' substrates such as drugs, pesticides, and dietary components containing soft nucleophilic heteroatoms. Able to oxidize drug molecules bearing a carbonyl group on an aliphatic chain, such as nabumetone and pentoxifylline. Also, in the absence of substrates, shows slow but yet significant NADPH oxidase activity. Acts as a positive modulator of cholesterol biosynthesis as well as glucose homeostasis, promoting metabolic aging via pleiotropic effects. This is Flavin-containing monooxygenase 5 (FMO5) from Oryctolagus cuniculus (Rabbit).